The sequence spans 375 residues: Aminomethyltransferase (375 aa).

The protein belongs to the GcvT family. As to quaternary structure, the glycine cleavage system is composed of four proteins: P, T, L and H.

The enzyme catalyses N(6)-[(R)-S(8)-aminomethyldihydrolipoyl]-L-lysyl-[protein] + (6S)-5,6,7,8-tetrahydrofolate = N(6)-[(R)-dihydrolipoyl]-L-lysyl-[protein] + (6R)-5,10-methylene-5,6,7,8-tetrahydrofolate + NH4(+). Its function is as follows. The glycine cleavage system catalyzes the degradation of glycine. This chain is Aminomethyltransferase, found in Cupriavidus pinatubonensis (strain JMP 134 / LMG 1197) (Cupriavidus necator (strain JMP 134)).